Here is a 429-residue protein sequence, read N- to C-terminus: UDP-N-acetylglucosamine 1-carboxyvinyltransferase (429 aa).

Residue 22–23 participates in phosphoenolpyruvate binding; the sequence is KN. Arg-102 is a binding site for UDP-N-acetyl-alpha-D-glucosamine. Cys-126 serves as the catalytic Proton donor. Cys-126 bears the 2-(S-cysteinyl)pyruvic acid O-phosphothioketal mark. Residues 131-135, Asp-316, and Ile-338 each bind UDP-N-acetyl-alpha-D-glucosamine; that span reads RPVDL.

It belongs to the EPSP synthase family. MurA subfamily.

The protein resides in the cytoplasm. It catalyses the reaction phosphoenolpyruvate + UDP-N-acetyl-alpha-D-glucosamine = UDP-N-acetyl-3-O-(1-carboxyvinyl)-alpha-D-glucosamine + phosphate. Its pathway is cell wall biogenesis; peptidoglycan biosynthesis. Functionally, cell wall formation. Adds enolpyruvyl to UDP-N-acetylglucosamine. This is UDP-N-acetylglucosamine 1-carboxyvinyltransferase from Rhodopseudomonas palustris (strain BisA53).